We begin with the raw amino-acid sequence, 1167 residues long: ATP-dependent helicase/deoxyribonuclease subunit B (1167 aa).

A UvrD-like helicase ATP-binding domain is found at 1 to 359; that stretch reads MSLRFLLGRS…IRQTEAYRDL (359 aa). Residue 8–15 coordinates ATP; sequence GRSGSGKT. The UvrD-like helicase C-terminal domain occupies 282-588; that stretch reads VNRRHQDKAL…EFALVPPAID (307 aa). Residues cysteine 803, cysteine 1125, cysteine 1128, and cysteine 1134 each contribute to the [4Fe-4S] cluster site.

Belongs to the helicase family. AddB/RexB type 1 subfamily. As to quaternary structure, heterodimer of AddA and AddB. Mg(2+) serves as cofactor. It depends on [4Fe-4S] cluster as a cofactor.

Functionally, the heterodimer acts as both an ATP-dependent DNA helicase and an ATP-dependent, dual-direction single-stranded exonuclease. Recognizes the chi site generating a DNA molecule suitable for the initiation of homologous recombination. The AddB subunit has 5' -&gt; 3' nuclease activity but not helicase activity. The sequence is that of ATP-dependent helicase/deoxyribonuclease subunit B from Geobacillus thermodenitrificans (strain NG80-2).